Consider the following 116-residue polypeptide: Ferredoxin (116 aa).

4Fe-4S ferredoxin-type domains are found at residues 2-31 and 35-64; these read TYVV…EGER and FMLV…PESP. Positions 9 and 17 each coordinate [3Fe-4S] cluster. Residues C21, C44, C47, and C50 each coordinate [4Fe-4S] cluster. C54 lines the [3Fe-4S] cluster pocket.

[4Fe-4S] cluster is required as a cofactor. Requires [3Fe-4S] cluster as cofactor.

Ferredoxins are iron-sulfur proteins that transfer electrons in a wide variety of metabolic reactions. This is Ferredoxin (fdxA) from Rickettsia conorii (strain ATCC VR-613 / Malish 7).